A 347-amino-acid polypeptide reads, in one-letter code: Ubiquitin thioesterase Otu1 (347 aa).

A Ubiquitin-like domain is found at 5-87 (FSVKLKSKKG…LIVEEKAAPA (83 aa)). The tract at residues 8–89 (KLKSKKGQFI…VEEKAAPAPA (82 aa)) is UBX-like. The 125-residue stretch at 150 to 274 (LLKKVVPADN…GIHYDPLYME (125 aa)) folds into the OTU domain. Residues 155–161 (VPADNSC) are cys-loop. The active site involves D158. C161 (nucleophile) is an active-site residue. The variable-loop stretch occupies residues 213–223 (IQKADSWGGAI). A his-loop region spans residues 263–267 (FDGIH). Residue I266 coordinates substrate. H267 is an active-site residue. The tract at residues 290–295 (LGVYQQ) is S2 site. The C2H2-type zinc finger occupies 317 to 341 (LRCMQCDVRLVGQVQAQEHAKQTGH). The active site involves H341.

The catalysed reaction is Thiol-dependent hydrolysis of ester, thioester, amide, peptide and isopeptide bonds formed by the C-terminal Gly of ubiquitin (a 76-residue protein attached to proteins as an intracellular targeting signal).. Its function is as follows. Hydrolase that can remove conjugated ubiquitin from proteins and may therefore play an important regulatory role at the level of protein turnover by preventing degradation. Involved in the regulation of DNA damage repair. This Drosophila melanogaster (Fruit fly) protein is Ubiquitin thioesterase Otu1.